A 398-amino-acid polypeptide reads, in one-letter code: NADH-quinone oxidoreductase subunit D (398 aa).

The protein belongs to the complex I 49 kDa subunit family. As to quaternary structure, NDH-1 is composed of 14 different subunits. Subunits NuoB, C, D, E, F, and G constitute the peripheral sector of the complex.

It is found in the cell inner membrane. It catalyses the reaction a quinone + NADH + 5 H(+)(in) = a quinol + NAD(+) + 4 H(+)(out). In terms of biological role, NDH-1 shuttles electrons from NADH, via FMN and iron-sulfur (Fe-S) centers, to quinones in the respiratory chain. The immediate electron acceptor for the enzyme in this species is believed to be ubiquinone. Couples the redox reaction to proton translocation (for every two electrons transferred, four hydrogen ions are translocated across the cytoplasmic membrane), and thus conserves the redox energy in a proton gradient. This is NADH-quinone oxidoreductase subunit D from Bradyrhizobium diazoefficiens (strain JCM 10833 / BCRC 13528 / IAM 13628 / NBRC 14792 / USDA 110).